Consider the following 1095-residue polypeptide: Formin-like protein 2 (1095 aa).

One can recognise a GBD/FH3 domain in the interval 23–469; it reads LPMPEPGELE…EAIQRQSTLE (447 aa). A coiled-coil region spans residues 381–478; the sequence is LLEDAETKNA…EKKIHELEKQ (98 aa). The segment at 521–602 is disordered; that stretch reads PSSGPLPPPP…PSAPPLPGTS (82 aa). Pro residues-rich tracts occupy residues 524–534, 548–576, and 583–599; these read GPLPPPPPPLP, ATPP…PLPG, and PAPP…PPLP. The region spanning 617-1008 is the FH2 domain; that stretch reads IKKPIKTKFR…LMEKLLEQEA (392 aa).

It belongs to the formin homology family. As to quaternary structure, interacts with TCP11L2; this interaction promotes muscle-derived satellite cell (MDSC) migration and differentiation.

The protein localises to the cytoplasm. Functionally, plays a role in the regulation of cell morphology and cytoskeletal organization. Required in the cortical actin filament dynamics. This is Formin-like protein 2 from Bos taurus (Bovine).